A 311-amino-acid chain; its full sequence is uncharacterized protein (311 aa).

9 consecutive transmembrane segments (helical) span residues 11–31 (LDNW…GYLS), 34–54 (VGIV…FLSL), 72–92 (LAIS…LFGI), 101–121 (HVIV…FVAQ), 147–167 (IEGI…WYLM), 198–218 (WFGV…FALS), 233–253 (GFIA…SIVI), 257–277 (FALA…TYLL), and 279–299 (TIPF…NVGP).

It is found in the cell membrane. This is an uncharacterized protein from Mycoplasma pneumoniae (strain ATCC 29342 / M129 / Subtype 1) (Mycoplasmoides pneumoniae).